Consider the following 173-residue polypeptide: Lipid A deacylase PagL (173 aa).

The N-terminal stretch at 1–23 (MKKLLPLAVLAALSSVHVASAQA) is a signal peptide. Over 25–28 (DVSA) the chain is Periplasmic. The chain crosses the membrane as a beta stranded span at residues 29-32 (AVGA). Thr-33 is a topological domain (periplasmic). The beta stranded transmembrane segment at 34-49 (GQSGMTYRLGLSWDWD) threads the bilayer. Residues 50 to 56 (KSWWQTS) are Extracellular-facing. Residues 57 to 71 (TGRLTGYWDAGYTYW) form a beta stranded membrane-spanning segment. Topologically, residues 72–73 (EG) are periplasmic. Residues 74-89 (GDEGAGKHSLSFAPVF) form a beta stranded membrane-spanning segment. Residue Val-90 is a topological domain, extracellular. The chain crosses the membrane as a beta stranded span at residues 91 to 93 (YEF). Topologically, residues 94 to 95 (AG) are periplasmic. A beta stranded transmembrane segment spans residues 96-98 (DSI). The Extracellular portion of the chain corresponds to 99–100 (KP). A beta stranded membrane pass occupies residues 101–115 (FIEAGIGVAAFSGTR). Topologically, residues 116–117 (VG) are periplasmic. The beta stranded transmembrane segment at 118–128 (DQNLGSSLNFE) threads the bilayer. The Extracellular portion of the chain corresponds to 129–138 (DRIGAGLKFA). The beta stranded transmembrane segment at 139–148 (NGQSVGVRAI) threads the bilayer. Catalysis depends on charge relay system residues His-149, Ser-151, and Glu-163. Topologically, residues 149–173 (HYSNAGLKQPNDGIESYSLFYKIPI) are periplasmic.

Belongs to the PagL family. In terms of assembly, homodimer.

The protein resides in the cell outer membrane. It catalyses the reaction a 3-(acyloxy)acyl derivative of bacterial toxin + H2O = a 3-hydroxyacyl derivative of bacterial toxin + a fatty acid + H(+). With respect to regulation, decreased activity at low temperatures (15 or 21 degrees Celsius). In terms of biological role, has lipid A 3-O-deacylase activity. Hydrolyzes the ester bond at the 3 position of lipid A, a bioactive component of lipopolysaccharide (LPS), thereby releasing the primary fatty acyl moiety. Lacks fatty acyl chain-length specificity as removes both 3-OH C10 and 3-OH C14 fatty acids from lipid A. This Pseudomonas aeruginosa (strain ATCC 15692 / DSM 22644 / CIP 104116 / JCM 14847 / LMG 12228 / 1C / PRS 101 / PAO1) protein is Lipid A deacylase PagL.